Reading from the N-terminus, the 151-residue chain is MTEIERKFLVATFPDGELHAVPLRQGYLTTPTDSIELRLRQQGTEYFMTLKSEGGLSRQEYEIQIDVTQFEMLWPATEGRRVEKTRYSGKLPDGQLFELDVFAGHLSPLMLVEVEFLSEDAAQAFIPPPWFGEEVTEDKRYKNKALALSIP.

The CYTH domain occupies 1 to 148; that stretch reads MTEIERKFLV…KRYKNKALAL (148 aa). Residue Y27 is the Proton acceptor of the active site.

As to quaternary structure, homodimer.

It catalyses the reaction triphosphate + H2O = phosphate + diphosphate. Its activity is regulated as follows. Activated by magnesium and mangenese ions, and inhibited by calcium, zinc and copper ions. In terms of biological role, involved in the hydrolysis of the beta-gamma-phosphoanhydride linkage of triphosphate-containing substrates (inorganic or nucleoside-linked). Catalyzes the hydrolysis of inorganic triphosphate (PPPi). The enzyme has a strong preference for linear PPPi compared with cyclic PPPi (cyclic trimetaphosphate) and to the linear P4. The longer chains polyphosphate are not hydrolyzed. It has only a slight thiamine triphosphatase (ThTPase) activity. Nucleoside triphosphatase activity is negligible in the presence of magnesium, but a small activity is observed in the presence of manganese, in particular with GTP. The chain is Inorganic triphosphatase from Nitrosomonas europaea (strain ATCC 19718 / CIP 103999 / KCTC 2705 / NBRC 14298).